We begin with the raw amino-acid sequence, 371 residues long: Chorismate synthase (371 aa).

Residues arginine 48 and arginine 54 each contribute to the NADP(+) site. FMN-binding positions include 130–132, 242–243, glycine 287, 302–306, and arginine 328; these read RSS, NA, and KPTSS.

It belongs to the chorismate synthase family. In terms of assembly, homotetramer. FMNH2 is required as a cofactor.

It carries out the reaction 5-O-(1-carboxyvinyl)-3-phosphoshikimate = chorismate + phosphate. It functions in the pathway metabolic intermediate biosynthesis; chorismate biosynthesis; chorismate from D-erythrose 4-phosphate and phosphoenolpyruvate: step 7/7. In terms of biological role, catalyzes the anti-1,4-elimination of the C-3 phosphate and the C-6 proR hydrogen from 5-enolpyruvylshikimate-3-phosphate (EPSP) to yield chorismate, which is the branch point compound that serves as the starting substrate for the three terminal pathways of aromatic amino acid biosynthesis. This reaction introduces a second double bond into the aromatic ring system. This Azorhizobium caulinodans (strain ATCC 43989 / DSM 5975 / JCM 20966 / LMG 6465 / NBRC 14845 / NCIMB 13405 / ORS 571) protein is Chorismate synthase.